A 184-amino-acid polypeptide reads, in one-letter code: Leucine-rich repeat-containing protein 20 (184 aa).

LRR repeat units follow at residues 23–44 (GSDTLDLADCKLVSFPICIYKV), 51–72 (QIHLITLANNELKSLTSKFMTT), 75–96 (QLRELRLEGNYLFRLPNEVSSL), 98–120 (HLRAIDLSRNQFQDFPEQLTTLP), 121–141 (ALETINLEENEIVDVPVEKLA), and 145–167 (ALRVINLRLNPLSADVRVIAPPL). Ser-175 bears the Phosphoserine mark.

This Mus musculus (Mouse) protein is Leucine-rich repeat-containing protein 20 (Lrrc20).